A 739-amino-acid polypeptide reads, in one-letter code: Phosphoribosylformylglycinamidine synthase subunit PurL (739 aa).

The active site involves histidine 55. ATP is bound by residues tyrosine 58 and lysine 97. Glutamate 99 lines the Mg(2+) pocket. Substrate-binding positions include 100–103 (SHNH) and arginine 122. Histidine 101 functions as the Proton acceptor in the catalytic mechanism. Aspartate 123 contributes to the Mg(2+) binding site. Residue glutamine 246 coordinates substrate. Aspartate 276 lines the Mg(2+) pocket. 320–322 (ESQ) is a substrate binding site. The ATP site is built by aspartate 502 and glycine 539. Asparagine 540 is a binding site for Mg(2+). Residue serine 542 coordinates substrate.

Belongs to the FGAMS family. In terms of assembly, monomer. Part of the FGAM synthase complex composed of 1 PurL, 1 PurQ and 2 PurS subunits.

Its subcellular location is the cytoplasm. The catalysed reaction is N(2)-formyl-N(1)-(5-phospho-beta-D-ribosyl)glycinamide + L-glutamine + ATP + H2O = 2-formamido-N(1)-(5-O-phospho-beta-D-ribosyl)acetamidine + L-glutamate + ADP + phosphate + H(+). Its pathway is purine metabolism; IMP biosynthesis via de novo pathway; 5-amino-1-(5-phospho-D-ribosyl)imidazole from N(2)-formyl-N(1)-(5-phospho-D-ribosyl)glycinamide: step 1/2. Its function is as follows. Part of the phosphoribosylformylglycinamidine synthase complex involved in the purines biosynthetic pathway. Catalyzes the ATP-dependent conversion of formylglycinamide ribonucleotide (FGAR) and glutamine to yield formylglycinamidine ribonucleotide (FGAM) and glutamate. The FGAM synthase complex is composed of three subunits. PurQ produces an ammonia molecule by converting glutamine to glutamate. PurL transfers the ammonia molecule to FGAR to form FGAM in an ATP-dependent manner. PurS interacts with PurQ and PurL and is thought to assist in the transfer of the ammonia molecule from PurQ to PurL. The chain is Phosphoribosylformylglycinamidine synthase subunit PurL from Lactiplantibacillus plantarum (strain ATCC BAA-793 / NCIMB 8826 / WCFS1) (Lactobacillus plantarum).